We begin with the raw amino-acid sequence, 336 residues long: F420-dependent glucose-6-phosphate dehydrogenase (336 aa).

Residue aspartate 39 participates in coenzyme F420-(gamma-Glu)n binding. Histidine 40 (proton donor) is an active-site residue. Residues threonine 76 and 107–108 contribute to the coenzyme F420-(gamma-Glu)n site; that span reads TG. Catalysis depends on glutamate 109, which acts as the Proton acceptor. Coenzyme F420-(gamma-Glu)n is bound by residues asparagine 112, 177–178, and 180–181; these read GG and VV. Residues threonine 195, lysine 198, lysine 259, and arginine 283 each coordinate substrate.

The protein belongs to the F420-dependent glucose-6-phosphate dehydrogenase family. As to quaternary structure, homodimer.

It catalyses the reaction oxidized coenzyme F420-(gamma-L-Glu)(n) + D-glucose 6-phosphate + H(+) = 6-phospho-D-glucono-1,5-lactone + reduced coenzyme F420-(gamma-L-Glu)(n). Functionally, catalyzes the coenzyme F420-dependent oxidation of glucose 6-phosphate (G6P) to 6-phosphogluconolactone. Appears to have a role in resistance to oxidative stress, via its consumption of G6P that serves as a source of reducing power to combat oxidative stress in mycobacteria. Cannot use NAD, NADP, FAD or FMN instead of coenzyme F420 as an electron acceptor. Exhibits nearly no activity with D-mannose-6-phosphate or D-fructose-6-phosphate as substrate. This chain is F420-dependent glucose-6-phosphate dehydrogenase (fgd), found in Mycolicibacterium smegmatis (strain ATCC 700084 / mc(2)155) (Mycobacterium smegmatis).